We begin with the raw amino-acid sequence, 218 residues long: MNLASISQSYMSHNENERSIVPYIPPPYHPTAPALAVSASQMETMSLGILNQAMSSSAGASGALKDEKAAFGAVAEALRDPEPIRKIKRQVGIQTLKTLKVELSGMRRKKLILKIIMFICANVTMATSLVGGMSIVDEDIAKHLAFDGKGDWVSKTVHGLNLLCTTMLLAANKISEKVREEIARTKRDIAKRQSYVSAATMSWDGDSVTLLRDVKCGD.

This sequence belongs to the orbivirus NS3 family.

Its function is as follows. May play a role in the release of virions from infected cells. The sequence is that of Non-structural protein NS3 (Segment-10) from Camelus dromedarius (Dromedary).